The chain runs to 227 residues: Putative ankyrin repeat protein L45 (227 aa).

ANK repeat units follow at residues 38–66, 78–107, 108–137, 139–167, 168–197, and 199–227; these read FETN…NINH, CLEE…NIFH, NENC…DVRA, NDYA…DVRS, CDSY…NYRA, and NHHA…GITK.

This is Putative ankyrin repeat protein L45 from Acanthamoeba polyphaga mimivirus (APMV).